The primary structure comprises 39 residues: TIINVKCTSPKQCLPPCKAQFGQSAGAKCMNGKCKCYPH.

3 cysteine pairs are disulfide-bonded: cysteine 7/cysteine 29, cysteine 13/cysteine 34, and cysteine 17/cysteine 36. Residues 37 to 39 form an interaction with Kv1.3 channels region; the sequence is YPH.

It belongs to the short scorpion toxin superfamily. Potassium channel inhibitor family. Alpha-KTx 02 subfamily. In terms of tissue distribution, expressed by the venom gland.

It is found in the secreted. Its function is as follows. Potent inhibitor of voltage-gated potassium channels such as Kv1.1/KCNA1 (IC(50)=0.144 nM), Kv1.2/KCNA2 (IC(50)=0.675 nM), Kv1.3/KCNA3 (IC(50)=0.23 nM) and Shaker (Kd=160 nM). Suppresses expression of the Kv1.3/KCNA3 channel in lipopolysaccharide (LPS)-stimulated mouse macrophages. Down-regulates secretion of nitric oxide (NO) and inflammatory cytokines, such as TNF-alpha/TNF, IL-1beta/IL1B and IL6, in LPS-stimulated mouse macrophages in a manner dependent on Kv1.3/KCNA3 channel blockage. Reduces activation of MAPK and NF-kappa-B signaling pathways in LPS-stimulated mouse macrophages. Modulates intracellular Ca(2+) signaling in human PMA/ionomycin-triggered T-cells. Interferes with the activation of the MAPK, NF-kappa-B and NFATc1 pathways in human PMA/ionomycin-triggered T-cells. Reduces proliferation of human PMA/ionomycin-triggered T-cells. Down-regulates secretion of cytokines, such as TNF-alpha/TNF and IL2, in human PMA/ionomycin-triggered T-cells. This chain is Potassium channel toxin alpha-KTx 2.2, found in Centruroides margaritatus (Central American bark Scorpion).